The sequence spans 337 residues: Transcription factor bHLH121 (337 aa).

Positions 58–108 constitute a bHLH domain; the sequence is ARKSQKAGREKLRREKLNEHFVELGNVLDPERPKNDKATILTDTVQLLKEL. Residues 235–337 form a disordered region; that stretch reads VHIPQNPGNR…AGGQKPDDAK (103 aa). 2 stretches are compositionally biased toward basic and acidic residues: residues 244 to 263 and 280 to 291; these read RSREPRAKVSRESRSEKAED and SDKDTLQRPEKT. Over residues 297 to 317 the composition is skewed to low complexity; that stretch reads NNNNNSIEESSHSSKCSSSPS.

As to quaternary structure, homodimer. Expressed constitutively in roots, leaves, stems, and flowers.

It is found in the nucleus. In Arabidopsis thaliana (Mouse-ear cress), this protein is Transcription factor bHLH121 (BHLH121).